A 317-amino-acid chain; its full sequence is MQSPDGQETGRPAAILIAGPTASGKSALGLRIARAFGGTVINTDSMQVYADLRVLSARPTAEEEGLAPHRLYGSIDGAVNFSVGHFQRQAAALLSEMDAGTLPVFVGGTGLYFRSLDEGISDLPEVPDAIRQRIRAEADGQPTETLHAALALRDPESAQGLRPSDRMRVMRALEIHAATGRSIGSFHDARVPGPLAGKPLLKLFLTTEREALRQRIDARFVTMMEQGALDEVAALRERRLDPLLPVMRAHGVPGLTAYLDGTISREEAIQRGQGDTRRYAKRQFTWFRHQMGEDWRWTTPEAAWSQVEARLSAPAGR.

An ATP-binding site is contributed by 19 to 26; sequence GPTASGKS. 21-26 provides a ligand contact to substrate; it reads TASGKS. The segment at 44-47 is interaction with substrate tRNA; sequence DSMQ.

Belongs to the IPP transferase family. Monomer. It depends on Mg(2+) as a cofactor.

The catalysed reaction is adenosine(37) in tRNA + dimethylallyl diphosphate = N(6)-dimethylallyladenosine(37) in tRNA + diphosphate. In terms of biological role, catalyzes the transfer of a dimethylallyl group onto the adenine at position 37 in tRNAs that read codons beginning with uridine, leading to the formation of N6-(dimethylallyl)adenosine (i(6)A). The sequence is that of tRNA dimethylallyltransferase from Methylorubrum extorquens (strain CM4 / NCIMB 13688) (Methylobacterium extorquens).